The chain runs to 1124 residues: SH3 and PX domain-containing protein 2A (1124 aa).

One can recognise a PX domain in the interval 4–128 (YCVQDATVVD…RFFEARPEDV (125 aa)). Residues 166–225 (MILEQYVVVSNYKKQENSELSLQAGEVVDVIEKNESGWWFVSTSEEQGWVPATYLEAQNG) form the SH3 1 domain. Residue T256 is modified to Phosphothreonine. One can recognise an SH3 2 domain in the interval 266-325 (SREEKYVTVQPYTSQSKDEIGFEKGVTVEVIRKNLEGWWYIRYLGKEGWAPASYLKKAKD). Residues S405 and S420 each carry the phosphoserine modification. Disordered regions lie at residues 414–443 (QRAQ…PKPP), 504–672 (RKKP…KLKA), 692–830 (SVTI…PKKE), and 886–952 (YLVA…GKTS). An SH3 3 domain is found at 447–506 (SVEVEYYTIAEFQSCISDGISFRGGQKAEVIDKNSGGWWYVQIGEKEGWAPASYIDKRKK). S546 and S566 each carry phosphoserine. The segment covering 575–585 (SGDRGSGDKHP) has biased composition (basic and acidic residues). The residue at position 592 (S592) is a Phosphoserine. Positions 607–619 (SSEDVALEEETIY) are enriched in acidic residues. Low complexity-rich tracts occupy residues 633–669 (SARG…SLLK) and 692–709 (SVTI…SSLS). S643 carries the phosphoserine modification. Residues 713 to 739 (GDLKPRSASDAGIRDTPKVGTKKDPDV) show a composition bias toward basic and acidic residues. Position 728 is a phosphothreonine (T728). A phosphoserine mark is found at S764, S766, and S812. T822 is subject to Phosphothreonine. In terms of domain architecture, SH3 4 spans 833-892 (GQGATYVTCSAYQKVQDSEISFPEGAEVHVLEKAESGWWYVRFGELEGWAPSHYLVAEEN). The stretch at 907 to 937 (SSQNEGKSDSLEKIEKRVQALNTVNQSKRAT) forms a coiled coil. Over residues 912-924 (GKSDSLEKIEKRV) the composition is skewed to basic and acidic residues. A compositionally biased stretch (polar residues) spans 926 to 935 (ALNTVNQSKR). Phosphoserine occurs at positions 993, 1007, 1008, and 1029. Positions 1020–1050 (KGRLAERAASQGSESPLLPTQRKGIPVSPVR) are disordered. The SH3 5 domain occupies 1063–1124 (NLKDVYISIA…VPSNYLEKKN (62 aa)).

The protein belongs to the SH3PXD2 family. As to quaternary structure, interacts with ADAM12, ADAM15 and ADAM19. Interacts with NOXO1. Interacts (via SH3 domains) with NOXA1; the interaction is direct. Interacts (via N-terminus) with CYBA. Interacts with FASLG. Interacts (via PX domain) with RAB40B (GTP-bound); interaction promotes invadopodia-mediated extracellular matrix degradation. In terms of processing, tyrosine phosphorylated by SRC. Phosphorylation plays a regulatory role in the protein localization. The intramolecular interaction of the PX domain with the third SH3 domain maintains the protein in the cytoplasm and phosphorylation disrupts this interaction, resulting in the redistribution of the protein from cytoplasm to the perimembrane region. Phosphorylated on serine upon DNA damage, probably by ATM or ATR. As to expression, widely expressed. Not found in the spleen and testis.

It is found in the cytoplasm. The protein localises to the cell projection. Its subcellular location is the podosome. Functionally, adapter protein involved in invadopodia and podosome formation, extracellular matrix degradation and invasiveness of some cancer cells. Binds matrix metalloproteinases (ADAMs), NADPH oxidases (NOXs) and phosphoinositides. Acts as an organizer protein that allows NOX1- or NOX3-dependent reactive oxygen species (ROS) generation and ROS localization. In association with ADAM12, mediates the neurotoxic effect of amyloid-beta peptide. The chain is SH3 and PX domain-containing protein 2A from Mus musculus (Mouse).